Consider the following 68-residue polypeptide: Bacteriocin lactococcin-B (68 aa).

A propeptide spanning residues 1 to 21 is cleaved from the precursor; sequence MKNQLNFNIVSDEELAEVNGG.

Its subcellular location is the secreted. In terms of biological role, kills Lactococci by dissipating the membrane potential of the cells. The chain is Bacteriocin lactococcin-B (lcnB) from Lactococcus lactis subsp. cremoris (Streptococcus cremoris).